The chain runs to 388 residues: Trans-enoyl reductase tenC (388 aa).

51–54 is an NADP(+) binding site; that stretch reads VDGK. Residue 142-149 participates in substrate binding; that stretch reads VGIASVGM. Residues 219-222, tyrosine 237, and 284-285 contribute to the NADP(+) site; these read SSES and LD. 304 to 308 lines the substrate pocket; sequence SFTQF. 373-374 is a binding site for NADP(+); it reads IK.

Belongs to the zinc-containing alcohol dehydrogenase family. Monomer.

The protein operates within secondary metabolite biosynthesis. Trans-enoyl reductase; part of the gene cluster that mediates the biosynthesis of tenellin-type 2-pyridones, iron-chelating compounds involved in iron stress tolerance, competition with the natural competitor fungus Metarhizium robertsii and insect hosts infection. TenC collaborates with the hybrid PKS-NRPS synthetase tenS to catalyze the assembly of the polyketide-amino acid backbone, since tenS lacks a designated enoylreductase (ER) domain. Upon formation of the polyketide backbone on the thiotemplate of tenS, the triketide is transferred to the NRPS module and linked to tyrosine to produce the pyrrolidine-2-dione intermediates, including pretellinin A, 11-hydropretellenin A, 12-hydropretellenin A, 13-hydropretellenin A, 14-hydropretellenin A, 12-oxopretellenin A and prototellinin D. The pathway begins with the assembly of the polyketide-amino acid backbone by the hybrid PKS-NRPS tenS with the help of the enoyl reductase tenC. These enzymes catalyze the synthesis of the pyrrolidine-2-dione intermediates pretellinin A, 11-hydropretellenin A, 12-hydropretellenin A, 13-hydropretellenin A, 14-hydropretellenin A, 12-oxopretellenin A and prototellinin D. The cytochrome P450 monooxygenase tenA then catalyzes an oxidative ring expansion of pretenellin A and 14-hydropretellenin A to form the 2-pyridone core, leading to pretenellin B and pyridovericin, respectively. The cytochrome P450 monooxygenase tenB is then required for the selective N-hydroxylation of the 2-pyridone nitrogen of yield tellinin and 15-hydroxytellenin (15-HT), respectively. The UDP-glucosyltransferase GT1 and the methyltransferase MT1, located outside the tenS gene cluster, contribute to the stepwise glycosylation and methylation of 15-HT to obtain the glycoside pyridovericin-N-O-(4-O-methyl-beta-D-glucopyranoside) (PMGP). Additional related compounds such as 1-O-methyl-15-HT, (8Z)-1-O-methyl-15-HT, and O-methyltenellin A are also produced but the enzymes involved in their biosynthesis have still to be determined. The protein is Trans-enoyl reductase tenC of Beauveria bassiana (strain ARSEF 2860) (White muscardine disease fungus).